We begin with the raw amino-acid sequence, 543 residues long: Type I restriction enzyme MpnII methylase subunit (543 aa).

S-adenosyl-L-methionine contacts are provided by residues 208–213 (EFFTPQ), 240–242 (SGS), and E265.

This sequence belongs to the N(4)/N(6)-methyltransferase family. The methyltransferase is composed of M and S polypeptides.

It carries out the reaction a 2'-deoxyadenosine in DNA + S-adenosyl-L-methionine = an N(6)-methyl-2'-deoxyadenosine in DNA + S-adenosyl-L-homocysteine + H(+). In terms of biological role, the subtype gamma methyltransferase (M) subunit of a type I restriction enzyme. The M and S subunits together form a methyltransferase (MTase) that probably methylates A-2 on the top strand and A-3 on the bottom strand of the sequence 5'-GAN(7)TAY-3'. As the bacterial DNA is methylated on this sequence and this is the only type I methylase in the genome, it is probably responsible for all of the methylation on this site in the genome. The R subunit has multiple frameshifts and is probably not expressed in this bacteria. This chain is Type I restriction enzyme MpnII methylase subunit, found in Mycoplasma pneumoniae (strain ATCC 29342 / M129 / Subtype 1) (Mycoplasmoides pneumoniae).